A 633-amino-acid chain; its full sequence is Glutamyl-tRNA(Gln) amidotransferase subunit E (633 aa).

It belongs to the GatB/GatE family. GatE subfamily. As to quaternary structure, heterodimer of GatD and GatE.

The catalysed reaction is L-glutamyl-tRNA(Gln) + L-glutamine + ATP + H2O = L-glutaminyl-tRNA(Gln) + L-glutamate + ADP + phosphate + H(+). Functionally, allows the formation of correctly charged Gln-tRNA(Gln) through the transamidation of misacylated Glu-tRNA(Gln) in organisms which lack glutaminyl-tRNA synthetase. The reaction takes place in the presence of glutamine and ATP through an activated gamma-phospho-Glu-tRNA(Gln). The GatDE system is specific for glutamate and does not act on aspartate. In Methanosarcina acetivorans (strain ATCC 35395 / DSM 2834 / JCM 12185 / C2A), this protein is Glutamyl-tRNA(Gln) amidotransferase subunit E.